The sequence spans 567 residues: Zinc finger protein 143 (567 aa).

C2H2-type zinc fingers lie at residues 230 to 254, 260 to 284, 290 to 314, 320 to 344, 350 to 374, 380 to 404, and 410 to 433; these read FRCD…ERSH, YQCD…VRTH, YRCS…VRTH, FKCP…IRTH, YYCS…VRIH, YVCT…HVVH, and YNCN…RTAH. The segment covering 506–520 has biased composition (polar residues); the sequence is SATESGPQHSHNLGG. The segment at 506-525 is disordered; it reads SATESGPQHSHNLGGSESRP.

Belongs to the GLI C2H2-type zinc-finger protein family.

It is found in the nucleus. Functionally, transcriptional activator. Activates the gene for selenocysteine tRNA (tRNAsec). Binds to the activator element (AE) motif of the selenocysteine tRNA gene promoter. The polypeptide is Zinc finger protein 143 (znf143) (Xenopus tropicalis (Western clawed frog)).